The chain runs to 225 residues: Plasma membrane-associated cation-binding protein 1 (225 aa).

The N-myristoyl glycine moiety is linked to residue Gly2. A Phosphothreonine modification is found at Thr32. Residue Ser107 is modified to Phosphoserine. The segment covering 140–197 (PVEEVKAEEPAKTEEPAKTEGTSGEKEEIVEETKKGETPETAVVEEKKPEVEEKKEEA) has biased composition (basic and acidic residues). Residues 140-225 (PVEEVKAEEP…TAPVAEPPKP (86 aa)) form a disordered region. 2 positions are modified to phosphothreonine: Thr152 and Thr177.

It belongs to the DREPP family. In terms of assembly, interacts with Turnip mosaic virus (TuMV) P3N-PIPO. Cu(2+) serves as cofactor. As to expression, mostly expressed in the basal region of hypocotyls. Expressed in seedlings, roots, shoots, stems, leaves (e.g. in epidermis and vascular tissues), flowers (e.g. in pistils and anthers) and siliques (at protein level).

The protein resides in the cell membrane. Its subcellular location is the cytoplasm. It localises to the cytoskeleton. The protein localises to the cell junction. It is found in the plasmodesma. Its function is as follows. May be involved in intracellular signaling through interaction with PtdInsPs and calmodulin (CaM); may keep PtdInsPs attached to the plasma membrane until Ca(2+)-CaM reaches a competitive concentration subsequent to an increase triggered by a stimulus, thus leading to PtdInsPs release and subsequent activation of InsPs-dependent signaling cascade. Interacts competitively at the N-terminus with calcium ions and CaM (in a calcium-dependent manner), and with the phosphatidylinositol phosphates PtdIns(3,4,5)P(3), PtdIns(3,4)P(2), PtdIns(4,5)P(2) and PtdIns(3,5)P(2). Also binds weakly to PtdIns(3)P, PtdIns(4)P and PtdIns(5)P. Negative regulator of hypocotyl cell elongation by destabilizing cortical microtubules in a calcium-dependent manner. Binds directly to and destabilized microtubules to enhance microtubule depolymerization when cytoplasmic calcium increases. In case of Turnip mosaic virus (TuMV) infection, confers sensitivity by promoting viral cell-to-cell movement through interaction with viral P3N-PIPO. The polypeptide is Plasma membrane-associated cation-binding protein 1 (PCAP1) (Arabidopsis thaliana (Mouse-ear cress)).